We begin with the raw amino-acid sequence, 222 residues long: Twisted gastrulation protein homolog 1 (222 aa).

The signal sequence occupies residues Met1 to Ser24. Asn80 and Asn146 each carry an N-linked (GlcNAc...) asparagine glycan.

This sequence belongs to the twisted gastrulation protein family. In terms of assembly, interacts with CHRD and/or BMP4. This interaction enhances CHRD/BMP4 complex formation. Interacts with BMP7. In terms of tissue distribution, expressed in lymph node, liver, kidney, and lung. Expression in the kidney was stronger in the medulla than in the cortex, particularly in the cells surrounding the medullary tubules. Expressed in growth plate cartilage of long bones, ribs, and digits and to a lesser extent also in the resting zone of the epiphysis, trabecular bone, and vertebral cartilage. Expression seems to be absent from other skeletal tissues including muscle, skin, and fibroblasts.

Its subcellular location is the secreted. In terms of biological role, may be involved in dorsoventral axis formation. Seems to antagonize BMP signaling by forming ternary complexes with CHRD and BMPs, thereby preventing BMPs from binding to their receptors. In addition to the anti-BMP function, also has pro-BMP activity, partly mediated by cleavage and degradation of CHRD, which releases BMPs from ternary complexes. May be an important modulator of BMP-regulated cartilage development and chondrocyte differentiation. May play a role in thymocyte development. This Mus musculus (Mouse) protein is Twisted gastrulation protein homolog 1 (Twsg1).